A 425-amino-acid chain; its full sequence is 2,3-diketo-L-gulonate TRAP transporter large permease protein YiaN (425 aa).

Transmembrane regions (helical) follow at residues 3 to 23, 54 to 74, 93 to 113, 139 to 159, 170 to 190, 209 to 229, 235 to 255, 277 to 297, 314 to 334, 355 to 375, and 399 to 419; these read VLIFLGCLLGGIAIGLPIAWA, FSLLAIPFFVLAGEIMNAGGL, LGYVGVLAAMIMASLSGSAVA, LIASGGIIAPIIPPSIPFIIF, LFMAGIAPGMMMGATLMLTWW, IWHSFVSGIWALFLPVIIIGG, FTPTEAGAVAAFYALFVATVI, VVMFLVASAQVSAWLITIAEL, LLFIVIMVAILIVGMVMDLTP, IYFGVMFIINCSIGLITPPIG, and YVLVLYSLLVVFVFIPDLIIL.

Belongs to the TRAP transporter large permease family. As to quaternary structure, the complex comprises the extracytoplasmic solute receptor protein YiaO, and the two transmembrane proteins YiaM and YiaN.

It localises to the cell inner membrane. In terms of biological role, part of the tripartite ATP-independent periplasmic (TRAP) transport system YiaMNO involved in the uptake of 2,3-diketo-L-gulonate. The sequence is that of 2,3-diketo-L-gulonate TRAP transporter large permease protein YiaN (yiaN) from Escherichia coli (strain K12).